A 359-amino-acid polypeptide reads, in one-letter code: tRNA N6-adenosine threonylcarbamoyltransferase (359 aa).

Residues histidine 115 and histidine 119 each contribute to the Fe cation site. Residues 137-141 (LVSGG), aspartate 170, glycine 183, and asparagine 283 contribute to the substrate site. Aspartate 311 serves as a coordination point for Fe cation. Residues 328 to 359 (APDSLDLAPRSRWPLDEKSAPLIGTGRRGAKA) form a disordered region.

Belongs to the KAE1 / TsaD family. The cofactor is Fe(2+).

Its subcellular location is the cytoplasm. It carries out the reaction L-threonylcarbamoyladenylate + adenosine(37) in tRNA = N(6)-L-threonylcarbamoyladenosine(37) in tRNA + AMP + H(+). Its function is as follows. Required for the formation of a threonylcarbamoyl group on adenosine at position 37 (t(6)A37) in tRNAs that read codons beginning with adenine. Is involved in the transfer of the threonylcarbamoyl moiety of threonylcarbamoyl-AMP (TC-AMP) to the N6 group of A37, together with TsaE and TsaB. TsaD likely plays a direct catalytic role in this reaction. This is tRNA N6-adenosine threonylcarbamoyltransferase from Brucella anthropi (strain ATCC 49188 / DSM 6882 / CCUG 24695 / JCM 21032 / LMG 3331 / NBRC 15819 / NCTC 12168 / Alc 37) (Ochrobactrum anthropi).